Consider the following 258-residue polypeptide: MSIIDAVILGIVEGLTEFLPVSSTGHLILTAGLLNLEQTDTLKCFEVVIQLGSILAVVFTFFERLKRDKQLWIKLIIGFLPTAAIGYLLYSHIKSLFSQNVVVYMLIIWGVIFIVVELLRKKNPPENEILTLDGISYKQAFFIGLSQCFAMVPGTSRSGATIIAGLLSGLNRQTAAAFSFLLAVPTMFAATFYDTYKNREIFAANMDNIQLFLLGGFVAFLVALFAIKMFLKFVSRFDYIPFGIYRILIAFAFMFFVL.

The next 8 helical transmembrane spans lie at 1-21 (MSII…FLPV), 42-62 (LKCF…FTFF), 71-91 (LWIK…LLYS), 96-116 (LFSQ…FIVV), 134-154 (GISY…MVPG), 173-193 (QTAA…ATFY), 211-231 (LFLL…KMFL), and 237-257 (FDYI…MFFV).

The protein belongs to the UppP family.

It localises to the cell inner membrane. The catalysed reaction is di-trans,octa-cis-undecaprenyl diphosphate + H2O = di-trans,octa-cis-undecaprenyl phosphate + phosphate + H(+). In terms of biological role, catalyzes the dephosphorylation of undecaprenyl diphosphate (UPP). Confers resistance to bacitracin. The sequence is that of Undecaprenyl-diphosphatase from Campylobacter hominis (strain ATCC BAA-381 / DSM 21671 / CCUG 45161 / LMG 19568 / NCTC 13146 / CH001A).